We begin with the raw amino-acid sequence, 232 residues long: Pyridoxine 5'-phosphate synthase (232 aa).

Position 7 (Asn-7) interacts with 3-amino-2-oxopropyl phosphate. 9–10 (DH) is a binding site for 1-deoxy-D-xylulose 5-phosphate. Arg-18 contributes to the 3-amino-2-oxopropyl phosphate binding site. His-43 acts as the Proton acceptor in catalysis. Arg-45 and His-50 together coordinate 1-deoxy-D-xylulose 5-phosphate. Glu-69 functions as the Proton acceptor in the catalytic mechanism. Residue Thr-99 participates in 1-deoxy-D-xylulose 5-phosphate binding. The Proton donor role is filled by His-185. Residues Gly-186 and 207 to 208 (GH) contribute to the 3-amino-2-oxopropyl phosphate site.

The protein belongs to the PNP synthase family. Homooctamer; tetramer of dimers.

Its subcellular location is the cytoplasm. It catalyses the reaction 3-amino-2-oxopropyl phosphate + 1-deoxy-D-xylulose 5-phosphate = pyridoxine 5'-phosphate + phosphate + 2 H2O + H(+). It participates in cofactor biosynthesis; pyridoxine 5'-phosphate biosynthesis; pyridoxine 5'-phosphate from D-erythrose 4-phosphate: step 5/5. In terms of biological role, catalyzes the complicated ring closure reaction between the two acyclic compounds 1-deoxy-D-xylulose-5-phosphate (DXP) and 3-amino-2-oxopropyl phosphate (1-amino-acetone-3-phosphate or AAP) to form pyridoxine 5'-phosphate (PNP) and inorganic phosphate. The protein is Pyridoxine 5'-phosphate synthase of Gluconobacter oxydans (strain 621H) (Gluconobacter suboxydans).